Reading from the N-terminus, the 224-residue chain is Ribosomal RNA small subunit methyltransferase G (224 aa).

S-adenosyl-L-methionine is bound by residues glycine 89, leucine 94, 140 to 141 (IE), and arginine 154.

The protein belongs to the methyltransferase superfamily. RNA methyltransferase RsmG family.

It localises to the cytoplasm. It carries out the reaction guanosine(527) in 16S rRNA + S-adenosyl-L-methionine = N(7)-methylguanosine(527) in 16S rRNA + S-adenosyl-L-homocysteine. In terms of biological role, specifically methylates the N7 position of guanine in position 527 of 16S rRNA. The protein is Ribosomal RNA small subunit methyltransferase G of Bordetella avium (strain 197N).